The primary structure comprises 290 residues: Secreted chorismate mutase (290 aa).

Positions Met1 to Ala21 are cleaved as a signal peptide. The tract at residues Val117–Arg140 is KWL1-binding extensive loop region (ELR). Residues Asn159 and Asn208 are each glycosylated (N-linked (GlcNAc...) asparagine).

In terms of assembly, homodimer. Forms a heterodimer with the host cytosolic chorismate mutase CM2. Interacts with the host kiwellin KWL1 which acts as a defense protein that protects maize from infection.

It localises to the secreted. The protein resides in the host cytoplasm. Its subcellular location is the host cytosol. It carries out the reaction chorismate = prephenate. Its activity is regulated as follows. Contrary to classical chorismate mutases, CMU1 is not subject to allosteric regulation by tryptophan and tyrosine. Activity is decreased in a non-competitive and allosteric manner by the binding of the host defense kiwellin KWL1 which probably blocks substrate access to the active site of CMU1. In terms of biological role, secreted chorismate mutase that is one component of a cocktail of effectors shaping the host metabolome and acting as virulence factors. The enzyme is taken up by plant cells, can spread to neighboring cells where it affects the biosynthesis of the plant immune signal salicylic acid by channelling chorismate into the phenylpropanoid pathway. Interferes with the activity of host cytosolic chorismate mutase CM2 through heterodimerization. In Mycosarcoma maydis (Corn smut fungus), this protein is Secreted chorismate mutase (CMU1).